The sequence spans 431 residues: 23S rRNA (uracil(1939)-C(5))-methyltransferase RlmD (431 aa).

One can recognise a TRAM domain in the interval 8–68 (KRRVTTRQII…SKYSRGQVKR (61 aa)). Cysteine 81, cysteine 87, cysteine 90, and cysteine 162 together coordinate [4Fe-4S] cluster. The S-adenosyl-L-methionine site is built by glutamine 265, phenylalanine 294, asparagine 299, glutamate 315, asparagine 342, and aspartate 363. The active-site Nucleophile is the cysteine 389.

This sequence belongs to the class I-like SAM-binding methyltransferase superfamily. RNA M5U methyltransferase family. RlmD subfamily.

The catalysed reaction is uridine(1939) in 23S rRNA + S-adenosyl-L-methionine = 5-methyluridine(1939) in 23S rRNA + S-adenosyl-L-homocysteine + H(+). Catalyzes the formation of 5-methyl-uridine at position 1939 (m5U1939) in 23S rRNA. This chain is 23S rRNA (uracil(1939)-C(5))-methyltransferase RlmD, found in Enterobacter sp. (strain 638).